A 199-amino-acid chain; its full sequence is MESGSVANDSGPLNSTPDVHLYGKTAAMKQRRSNTMLFVFRLLTFSFSLAAVLVMGTNKQKIRSAPQYLEVAWHDFDPFRYVFAVNAIICVYSFVETWLAVYTLSRGTLLLPETFQVWFDYGHDQGFACLLFSANSVGIAMAQLLQSGSTLIQGQYYCSDAGAYCTQARVSIAMGFGAFLFLALSSFLTGLRVARWYLP.

Residues 1–35 are Cytoplasmic-facing; sequence MESGSVANDSGPLNSTPDVHLYGKTAAMKQRRSNT. Residues 36–56 traverse the membrane as a helical segment; the sequence is MLFVFRLLTFSFSLAAVLVMG. Residues 57-80 lie on the Extracellular side of the membrane; sequence TNKQKIRSAPQYLEVAWHDFDPFR. The chain crosses the membrane as a helical span at residues 81 to 101; sequence YVFAVNAIICVYSFVETWLAV. Over 102–124 the chain is Cytoplasmic; it reads YTLSRGTLLLPETFQVWFDYGHD. The helical transmembrane segment at 125 to 145 threads the bilayer; it reads QGFACLLFSANSVGIAMAQLL. Residues 146–169 lie on the Extracellular side of the membrane; the sequence is QSGSTLIQGQYYCSDAGAYCTQAR. A helical membrane pass occupies residues 170 to 190; the sequence is VSIAMGFGAFLFLALSSFLTG. Topologically, residues 191–199 are cytoplasmic; the sequence is LRVARWYLP.

It belongs to the Casparian strip membrane proteins (CASP) family. In terms of assembly, homodimer and heterodimers.

The protein localises to the cell membrane. This Physcomitrium patens (Spreading-leaved earth moss) protein is CASP-like protein 4C1.